The primary structure comprises 159 residues: METAICGRLALAPSSLFNSKSGDKHLVSKGPCVNRSILMTLSTSAALGKGGGVLDKPIIEKTTPGRESEFDLRKSKKIAPPYRVILHNDNFNKREYVVQVLMKVIPGMTVDNAVNIMQEAHINGLAVVIVCAQADAEQHCMQLRGNGLLSSVEPDGGGC.

The N-terminal 44 residues, 1 to 44, are a transit peptide targeting the chloroplast; the sequence is METAICGRLALAPSSLFNSKSGDKHLVSKGPCVNRSILMTLSTS.

Belongs to the ClpS family. Interacts with CLPC1 (via N-terminus) and CLPC2, but not with CLPt1 or CLPT2. Binds to ClpF; this interaction stimulates their association with ClpC. Expressed exclusively in photosynthetic green tissues with high levels in young, developing leaf tissues.

It is found in the plastid. It localises to the chloroplast stroma. In terms of biological role, small adapter protein that modulate the activity of CLPC. Involved in plastid biogenesis in particular when chloroplast protein synthesis capacity is a limiting factor. Probably involved in substrate selection for plastid Clp protease system. Recruitment to ClpC chaperones is facilitated by CLPF thus forming a binary adapter for selective substrate recognition and delivery to plastid Clp protease system (CLPC). The polypeptide is ATP-dependent Clp protease adapter protein CLPS1, chloroplastic (Arabidopsis thaliana (Mouse-ear cress)).